A 57-amino-acid chain; its full sequence is UPF0391 membrane protein bsl5717 (57 aa).

2 helical membrane-spanning segments follow: residues 6 to 26 and 35 to 55; these read WALI…TGIS and FLFY…LTIF.

The protein belongs to the UPF0391 family.

Its subcellular location is the cell membrane. The protein is UPF0391 membrane protein bsl5717 of Bradyrhizobium diazoefficiens (strain JCM 10833 / BCRC 13528 / IAM 13628 / NBRC 14792 / USDA 110).